Reading from the N-terminus, the 257-residue chain is Imidazole glycerol phosphate synthase subunit HisF (257 aa).

Residues aspartate 12 and aspartate 131 contribute to the active site.

It belongs to the HisA/HisF family. As to quaternary structure, heterodimer of HisH and HisF.

It localises to the cytoplasm. It carries out the reaction 5-[(5-phospho-1-deoxy-D-ribulos-1-ylimino)methylamino]-1-(5-phospho-beta-D-ribosyl)imidazole-4-carboxamide + L-glutamine = D-erythro-1-(imidazol-4-yl)glycerol 3-phosphate + 5-amino-1-(5-phospho-beta-D-ribosyl)imidazole-4-carboxamide + L-glutamate + H(+). Its pathway is amino-acid biosynthesis; L-histidine biosynthesis; L-histidine from 5-phospho-alpha-D-ribose 1-diphosphate: step 5/9. IGPS catalyzes the conversion of PRFAR and glutamine to IGP, AICAR and glutamate. The HisF subunit catalyzes the cyclization activity that produces IGP and AICAR from PRFAR using the ammonia provided by the HisH subunit. The protein is Imidazole glycerol phosphate synthase subunit HisF of Rhodococcus opacus (strain B4).